The sequence spans 657 residues: Glycogen debranching enzyme (657 aa).

Asp-336 serves as the catalytic Nucleophile. The active-site Proton donor is the Glu-371. The disordered stretch occupies residues 460 to 479 (ANGEENRDGTNNNYSNNHGK).

The protein belongs to the glycosyl hydrolase 13 family.

The catalysed reaction is Hydrolysis of (1-&gt;6)-alpha-D-glucosidic linkages to branches with degrees of polymerization of three or four glucose residues in limit dextrin.. The protein operates within glycan degradation; glycogen degradation. Its function is as follows. Removes maltotriose and maltotetraose chains that are attached by 1,6-alpha-linkage to the limit dextrin main chain, generating a debranched limit dextrin. In Escherichia coli (strain SMS-3-5 / SECEC), this protein is Glycogen debranching enzyme.